The sequence spans 500 residues: NAD(P)H-quinone oxidoreductase chain 4, chloroplastic (500 aa).

Transmembrane regions (helical) follow at residues 4-24 (FPWLTIIVVFPISAGSLMLFL), 35-55 (YTISICILELLLTTYAFCYNF), 87-107 (IGTILLTGFITTLATLAAFPV), 134-154 (LLLFFIMWELELIPVYHLLSM), 167-187 (FILYTAGSSIFLLIGVLGISL), 211-231 (ILFYIGFLIAFAVKSPIIPLH), 242-262 (HYSTCMLLAGILLKMGAYGLV), 272-292 (AHSMFSPWLMVVGTIQIIYAA), 305-325 (IAYSSVSHMGFIIIGISSITD), 330-350 (GAILQIISHGFIGAALFFLAG), 386-406 (LALPGMSGFVAELIVFFGIIT), 416-436 (IFIIFVMAIGMILTPIYLLSM), and 462-482 (LFLSISILLPIIGIGIYPDFV).

This sequence belongs to the complex I subunit 4 family.

The protein localises to the plastid. It localises to the chloroplast thylakoid membrane. The enzyme catalyses a plastoquinone + NADH + (n+1) H(+)(in) = a plastoquinol + NAD(+) + n H(+)(out). It catalyses the reaction a plastoquinone + NADPH + (n+1) H(+)(in) = a plastoquinol + NADP(+) + n H(+)(out). The chain is NAD(P)H-quinone oxidoreductase chain 4, chloroplastic from Crucihimalaya wallichii (Rock-cress).